Here is a 375-residue protein sequence, read N- to C-terminus: Aminomethyltransferase (375 aa).

Belongs to the GcvT family. As to quaternary structure, the glycine cleavage system is composed of four proteins: P, T, L and H.

It carries out the reaction N(6)-[(R)-S(8)-aminomethyldihydrolipoyl]-L-lysyl-[protein] + (6S)-5,6,7,8-tetrahydrofolate = N(6)-[(R)-dihydrolipoyl]-L-lysyl-[protein] + (6R)-5,10-methylene-5,6,7,8-tetrahydrofolate + NH4(+). The glycine cleavage system catalyzes the degradation of glycine. In Cupriavidus necator (strain ATCC 17699 / DSM 428 / KCTC 22496 / NCIMB 10442 / H16 / Stanier 337) (Ralstonia eutropha), this protein is Aminomethyltransferase.